Reading from the N-terminus, the 327-residue chain is uncharacterized protein (327 aa).

An N-terminal signal peptide occupies residues 1–24 (MKQPGFIRLATLALLSTLSFFSHG).

This is an uncharacterized protein from Salmonella typhimurium (strain LT2 / SGSC1412 / ATCC 700720).